Reading from the N-terminus, the 479-residue chain is Probable aspartic-type endopeptidase OPSB (479 aa).

An N-terminal signal peptide occupies residues 1–19 (MRGDSFIWSLTTAASLLYA). A Peptidase A1 domain is found at 58-393 (SGKTVSQDLD…DLDNNEISIA (336 aa)). N68 carries N-linked (GlcNAc...) asparagine glycosylation. D76 is a catalytic residue. N-linked (GlcNAc...) asparagine glycosylation occurs at N121. The active site involves D275. N398 is a glycosylation site (N-linked (GlcNAc...) asparagine). Positions 435-454 (LSGIETGVPGARPTSRGAAP) are disordered. A lipid anchor (GPI-anchor amidated glycine) is attached at G451. A propeptide spans 452–479 (AAPTMRPDVTFGVAAAGLAGAGILFAFM) (removed in mature form).

It belongs to the peptidase A1 family.

Its subcellular location is the cell membrane. In terms of biological role, probable GPI-anchored aspartic-type endopeptidase which contributes to virulence. The chain is Probable aspartic-type endopeptidase OPSB (OPSB) from Arthroderma otae (strain ATCC MYA-4605 / CBS 113480) (Microsporum canis).